We begin with the raw amino-acid sequence, 905 residues long: Toll-like receptor 3 (905 aa).

An N-terminal signal peptide occupies residues 1 to 25; it reads MKGCSSYLMYSFGGLLSLWILLVSS. Residues 26–52 enclose the LRRNT domain; that stretch reads TNQCTVRYNVADCSHLKLTHIPDDLPS. The Lumenal portion of the chain corresponds to 26-705; it reads TNQCTVRYNV…SCKDSAPFEL (680 aa). Cysteines 29 and 38 form a disulfide. Residues asparagine 53, asparagine 58, and asparagine 71 are each glycosylated (N-linked (GlcNAc...) asparagine). LRR repeat units lie at residues 53 to 74, 77 to 98, 101 to 122, 125 to 146, 149 to 170, and 173 to 196; these read NITV…NFTR, QLAI…LCQI, LLKV…TFVF, NLTE…PFKN, NLIK…TGVQ, and NLQE…EFLG. Cysteine 96 and cysteine 123 are oxidised to a cystine. Asparagine 125 carries N-linked (GlcNAc...) asparagine glycosylation. A glycan (N-linked (GlcNAc...) asparagine) is linked at asparagine 197. The stretch at 199–220 is one LRR 7 repeat; the sequence is SLRKLDLSSNPLKEFSPGCFQT. 4 N-linked (GlcNAc...) asparagine glycosylation sites follow: asparagine 248, asparagine 253, asparagine 276, and asparagine 292. 15 LRR repeats span residues 250-271, 276-297, 300-321, 324-345, 357-378, 381-401, 409-430, 433-454, 458-479, 482-502, 508-529, 532-553, 564-585, 588-609, and 612-633; these read SIQN…TFSG, NLTQ…SFSY, SLRY…SFYG, NLRY…ASHP, YLEY…TFTG, SLKY…TNET, PLLT…TFSW, QLRI…QEWR, NIFE…SFAL, SLQR…SPSP, NLTI…LLEG, NLEI…ANPG, HLHI…VFKN, ELKS…IFDD, and SLRS…VFGP. Residues asparagine 399, asparagine 414, and asparagine 425 are each glycosylated (N-linked (GlcNAc...) asparagine). A glycan (N-linked (GlcNAc...) asparagine) is linked at asparagine 508. Residues 646–699 form the LRRCT domain; the sequence is NPFDCTCESISWFVNWINQTHTNISELSTHYLCNTPHHYYGFPLKLFDTSSCKD. 2 disulfide bridges follow: cysteine 650/cysteine 678 and cysteine 652/cysteine 697. N-linked (GlcNAc...) asparagine glycosylation is found at asparagine 663 and asparagine 668. The chain crosses the membrane as a helical span at residues 706 to 726; sequence LFIISTSMLLVFILVVLLIHI. At 727–905 the chain is on the cytoplasmic side; sequence EGWRISFYWN…VALGSRNSAH (179 aa). Residues 755 to 898 form the TIR domain; that stretch reads FEYTAYIIHA…AFHHKLQVAL (144 aa). Residue tyrosine 760 is modified to Phosphotyrosine. Glycyl lysine isopeptide (Lys-Gly) (interchain with G-Cter in ubiquitin) cross-links involve residues lysine 766, lysine 813, and lysine 832. Tyrosine 859 is subject to Phosphotyrosine.

The protein belongs to the Toll-like receptor family. As to quaternary structure, monomer and homodimer; dimerization is triggered by ligand-binding, the signaling unit is composed of one ds-RNA of around 40 bp and two TLR3 molecules, and lateral clustering of signaling units along the length of the ds-RNA ligand is required for TLR3 signal transduction. Interacts (via transmembrane domain) with UNC93B1; the interaction is required for transport from the ER to the endosomes. Interacts with SRC; upon binding of double-stranded RNA. Interacts with TICAM1 (via the TIR domain) in response to poly(I:C) and this interaction is enhanced in the presence of WDFY1. The tyrosine-phosphorylated form (via TIR domain) interacts with WDFY1 (via WD repeat 2) in response to poly(I:C). Ubiquitinated by RNF170 at Lys-766 via 'Lys-48'-linked ubiquitin chains; leading to TLR3 proteasomal degradation. In terms of processing, TLR3 signaling requires a proteolytic cleavage mediated by cathepsins CTSB and CTSH, the cleavage occurs between amino acids 252 and 346. The cleaved form of TLR3 is the predominant form found in endosomes. Post-translationally, ubiquitinated by TRIM3; leading to recognition and sorting of polyubiquitinated TLR3 by the ESCRT complexes. Ubiquitinated by ZNRF1 via 'Lys-63'-linked ubiquitin chains; leading to TLR3 lysosomal trafficking and degradation. As to expression, highly expressed in lung. After intraperitoneal injection of lipopolysaccharide, highly expressed in brain, heart, kidney, liver, lung and spleen.

The protein resides in the endoplasmic reticulum membrane. It is found in the endosome membrane. Its subcellular location is the early endosome. In terms of biological role, key component of innate and adaptive immunity. TLRs (Toll-like receptors) control host immune response against pathogens through recognition of molecular patterns specific to microorganisms. TLR3 is a nucleotide-sensing TLR which is activated by double-stranded RNA, a sign of viral infection. Acts via the adapter TRIF/TICAM1, leading to NF-kappa-B activation, IRF3 nuclear translocation, cytokine secretion and the inflammatory response. This is Toll-like receptor 3 from Mus musculus (Mouse).